Reading from the N-terminus, the 634-residue chain is MNPSAPSYPMASLYVGDLHPDVTEAMLYEKFSPAGPILSIRVCRDMMTRRSLGYAYVNFQQPADAERALDTMNFDVIKGRPVRIMWSQRDPSLRKSGVGNIFIKNLDKSIDNKALYDTFSAFGNILSCKVVCDENGSKGYGFVHFETHEAAERAIEKMNGMLLNDRKVFVGRFKSRKEREAEMGARAKEFTNVYIKNFGEDMDDEKLKEIFCKYGPALSIRVMTDDSGKSKGFGFVSFERHEDAQRAVDEMNGKEMNGKQVYVGRAQKKGERQTELKRKFEQMKQDRMTRYQGVNLYVKNLDDGLDDERLRKEFSPFGTITSAKVMMEGGRSKGFGFVCFSSPEEATKAVTEMNGRIVATKPLYVALAQRKEERQAHLTSQYMQRMASVRAVPNPVLNPYQPAPPSGYFMAAIPQAQNRAAYYPTSQLAQLRPSPRWATQGVRPQHFQNMPNAAVRPSAPRPQTFNPVRPASQVPRMMTSQRMGSQAMGPRPAAAGAATGPAQVRGVPQYKYAPGVRNPQQHMPTQPQVPMQQPAVHVQGQEPLTASMLAAAPPQEQKQMLGERLFPLIQNMHPSLAGKITGMLLEIDNSELLHMLESPESLRSKVDEAVAVLQAHQAKEAAQKSVPSPAVPAV.

4 RRM domains span residues 11–89 (ASLY…WSQR), 99–175 (GNIF…RFKS), 191–268 (TNVY…RAQK), and 294–370 (VNLY…LAQR). The PABC domain maps to 541 to 618 (QEPLTASMLA…AVAVLQAHQA (78 aa)).

It belongs to the polyadenylate-binding protein type-1 family. In terms of assembly, interacts with ybx1; interaction recruits pabpc1a on C5-methylcytosine (m5C)-containing mRNAs, preventing their degradation.

Its subcellular location is the cytoplasm. In terms of biological role, binds the poly(A) tail of mRNA. Prevents mRNA deadenylation and confers poly(A) stability. Binds to N6-methyladenosine (m6A)-containing mRNAs. Stimulates the translation of mRNAs to which it is bound, acting, at least in part, with dazl. Involved in the maternal-to-zygotic transition in early embryo via interaction with ybx1: interaction recruits pabpc1a on C5-methylcytosine (m5C)-containing maternal mRNAs, preventing their degradation. The sequence is that of Polyadenylate-binding protein 1A from Danio rerio (Zebrafish).